A 409-amino-acid chain; its full sequence is N-acetylglucosamine-6-phosphate deacetylase (409 aa).

E143 is an a divalent metal cation binding site. 154–155 (AH) serves as a coordination point for substrate. A divalent metal cation-binding residues include H211 and H232. Residues 235 to 236 (NA), R243, and 269 to 272 (DGIH) contribute to the substrate site. Catalysis depends on D294, which acts as the Proton donor/acceptor. 328-330 (LSG) contributes to the substrate binding site.

This sequence belongs to the metallo-dependent hydrolases superfamily. NagA family. A divalent metal cation serves as cofactor.

The enzyme catalyses N-acetyl-D-glucosamine 6-phosphate + H2O = D-glucosamine 6-phosphate + acetate. It participates in amino-sugar metabolism; N-acetylneuraminate degradation. Its function is as follows. Hydrolyzes the N-glycolyl group from N-glycolylglucosamine 6-phosphate (GlcNGc-6-P) in the N-glycolylneuraminic acid (Neu5Gc) degradation pathway. The chain is N-acetylglucosamine-6-phosphate deacetylase (AMDHD2) from Bos taurus (Bovine).